Here is a 212-residue protein sequence, read N- to C-terminus: tRNA (guanine-N(7)-)-methyltransferase (212 aa).

Residues Glu-44, Glu-69, Asp-96, and Asp-118 each contribute to the S-adenosyl-L-methionine site. Residue Asp-118 is part of the active site. Lys-122 is a substrate binding site. The interval 124–129 (RHEKRR) is interaction with RNA. Residues Asp-154 and 192–195 (TEYE) contribute to the substrate site.

This sequence belongs to the class I-like SAM-binding methyltransferase superfamily. TrmB family.

It carries out the reaction guanosine(46) in tRNA + S-adenosyl-L-methionine = N(7)-methylguanosine(46) in tRNA + S-adenosyl-L-homocysteine. Its pathway is tRNA modification; N(7)-methylguanine-tRNA biosynthesis. Functionally, catalyzes the formation of N(7)-methylguanine at position 46 (m7G46) in tRNA. The protein is tRNA (guanine-N(7)-)-methyltransferase of Pediococcus pentosaceus (strain ATCC 25745 / CCUG 21536 / LMG 10740 / 183-1w).